The sequence spans 746 residues: Protein psiN (746 aa).

The first 23 residues, 1-23, serve as a signal peptide directing secretion; sequence MGNINKKLFYFLIQLITILIVLS. At 24 to 679 the chain is on the extracellular side; the sequence is DDSYNSLLPL…KCQSAAVKAA (656 aa). 2 N-linked (GlcNAc...) asparagine glycosylation sites follow: Asn97 and Asn124. In terms of domain architecture, PA14 spans 125–276; it reads VTSDDPRIYS…YDYCGVCEGM (152 aa). Residues Asn319, Asn353, Asn380, Asn477, Asn553, Asn628, and Asn654 are each glycosylated (N-linked (GlcNAc...) asparagine). A helical transmembrane segment spans residues 680–700; the sequence is VGVGAGAAAGIAIGGAIALGL. At 701-746 the chain is on the cytoplasmic side; the sequence is AAFGGKRGYDAWKSSRDNQIQTSSENPLYNPNPNQGDNPLYAANNS. A disordered region spans residues 714 to 746; it reads SSRDNQIQTSSENPLYNPNPNQGDNPLYAANNS. Residues 717 to 746 are compositionally biased toward polar residues; it reads DNQIQTSSENPLYNPNPNQGDNPLYAANNS.

It belongs to the prespore-cell-inducing factor family.

Its subcellular location is the membrane. This chain is Protein psiN (psiN), found in Dictyostelium discoideum (Social amoeba).